Consider the following 159-residue polypeptide: Growth arrest and DNA damage-inducible protein GADD45 gamma (159 aa).

A homodimerization region spans residues 43–86 (VYESAKVLNVDPDNVTFCVLAAGEEDEGDIALQIHFTLIQAFCC).

Belongs to the GADD45 family. In terms of assembly, undergoes concentration-dependent homodimerization, which is required for growth inhibititory activity and enhances interaction with PCNA. Interacts with GADD45GIP1. Interacts with PCNA.

Its function is as follows. Involved in the regulation of growth and apoptosis. Mediates activation of stress-responsive MTK1/MEKK4 MAPKKK. The sequence is that of Growth arrest and DNA damage-inducible protein GADD45 gamma (GADD45G) from Homo sapiens (Human).